Reading from the N-terminus, the 48-residue chain is Delta-stichotoxin-Hcr1a (48 aa).

3 disulfide bridges follow: Cys3/Cys43, Cys5/Cys33, and Cys26/Cys44. The residue at position 48 (Lys48) is a Lysine amide; partial; in Delta-stichotoxin-Hcr1f.

This sequence belongs to the sea anemone sodium channel inhibitory toxin family. Type II subfamily. As to quaternary structure, probably composed of two peptide chains of 12 and 35 residues connected by two disulfide bonds (Cys-3-Cys-43 and Cys-5-Cys-33). Delta-SHTX-Hcr1f (RTX-VI) may be the result of post-translational modification of delta-SHTX-Hcr1a (RTX-III), which would consist of Arg-13 cleavage.

The protein localises to the secreted. It is found in the nematocyst. Functionally, binds to site 3 of voltage-gated sodium channels and inhibits the inactivation process. Specifically inhibits mammalian Nav1.3/SCN3A and Nav1.6/SCN8A sodium channels, as well as insect BgNav1 and VdNav1 sodium channels. Binds to site 3 of voltage-gated sodium channels and inhibits the inactivation process. Specifically inhibits mammalian Nav1.2/SCN3A (low inhibition) and Nav1.6/SCN8A sodium channels, as well as insect BgNav1 and VdNav1 sodium channels. The polypeptide is Delta-stichotoxin-Hcr1a (Radianthus crispa (Leathery sea anemone)).